Consider the following 283-residue polypeptide: Putative S-adenosyl-L-methionine-dependent methyltransferase SCO7813 (283 aa).

Residues Asp121 and 150–151 (DL) each bind S-adenosyl-L-methionine. A disordered region spans residues 264 to 283 (MSTLPQHEDGPGGLISAVRR).

It belongs to the UPF0677 family.

In terms of biological role, exhibits S-adenosyl-L-methionine-dependent methyltransferase activity. This is Putative S-adenosyl-L-methionine-dependent methyltransferase SCO7813 from Streptomyces coelicolor (strain ATCC BAA-471 / A3(2) / M145).